The primary structure comprises 768 residues: Multidomain esterase (768 aa).

Residues 1-40 (MKKHFVVGETIKRFLRIGTSLALSISTLSLLPSAPRLSSA) form the signal peptide. The interval 41–264 (AGTIKIMPLG…YWLEQIEGYL (224 aa)) is acetylxylan esterase. Ser68 (nucleophile; for acetylxylan esterase activity) is an active-site residue. Active-site for acetylxylan esterase activity residues include Asp240 and His243. Low complexity predominate over residues 267–283 (SDGPQQTQPTQPSQGDS). Residues 267–289 (SDGPQQTQPTQPSQGDSGPELIY) are disordered. The region spanning 285 to 352 (PELIYGDLDG…IIGKIKEFTV (68 aa)) is the Dockerin domain. Positions 353 to 768 (AEKTVTEKPV…ADTFASKWLY (416 aa)) are glucuronoyl esterase. The GXSYXG catalytic site motif motif lies at 563-568 (GVSRYG). Ser565 (nucleophile; for glucuronoyl esterase activity) is an active-site residue. Residues Lys569, Glu633, and Trp679 each contribute to the substrate site.

The protein in the N-terminal section; belongs to the carbohydrate esterase 3 (CE3) family. In the C-terminal section; belongs to the carbohydrate esterase 15 (CE15) family.

It localises to the secreted. It catalyses the reaction Deacetylation of xylans and xylo-oligosaccharides.. The enzyme catalyses a 4-O-methyl-alpha-D-glucuronosyl ester derivative + H2O = 4-O-methyl-alpha-D-glucuronate derivative + an alcohol + H(+). The protein operates within glycan degradation; xylan degradation. Esterase involved in the degradation of plant cell wall polysaccharides. Catalyzes the deacetylation of chemically acetylated xylan and native, steam-extracted xylan. Seems to act in synergy with the xylanase XynD which produces xylo-oligosaccharides. Also catalyzes the deesterification of methyl esters of 4-O-methyl-D-glucuronic acid (MeGlcA) side residues in synthetic glucuronoxylan methyl ester, suggesting that it may be able to cleave ester linkages between MeGlcA carboxyl and more complex alcohols, including linkages between hemicellulose and lignin alcohols in plant cell walls. This is Multidomain esterase from Ruminococcus flavefaciens.